A 668-amino-acid chain; its full sequence is GTP-binding protein 1 (668 aa).

The tract at residues 1-32 is disordered; that stretch reads MAAERSRSPVDSPVPASMFAPEPSSPGAARAA. Ser-6, Ser-8, Ser-12, Ser-24, Ser-25, Ser-44, Ser-47, and Ser-69 each carry phosphoserine. The tr-type G domain maps to 158 to 389; it reads FLEVRVAVVG…LNLLSPRTSY (232 aa). A G1 region spans residues 167–174; it reads GNVDAGKS. 167 to 174 contributes to the GTP binding site; that stretch reads GNVDAGKS. The tract at residues 206-210 is G2; that stretch reads GRTSS. The segment at 252 to 255 is G3; that stretch reads DLAG. Residues 252–256 and 308–311 each bind GTP; these read DLAGH and TKID. The interval 308–311 is G4; that stretch reads TKID. The interval 366–368 is G5; the sequence is SNV. Residues 573–595 show a composition bias toward polar residues; it reads LLQTTNNSPMNSKPQQIKMQSTK. The disordered stretch occupies residues 573 to 668; it reads LLQTTNNSPM…GACVTPASGC (96 aa). The residue at position 580 (Ser-580) is a Phosphoserine. Low complexity predominate over residues 609-619; it reads GVPAAGGPPTG. Polar residues predominate over residues 624–637; sequence SLGTAQAASTSGLQ. The span at 646 to 657 shows a compositional bias: basic residues; sequence GRRRGGQRHKVK.

It belongs to the TRAFAC class translation factor GTPase superfamily. Classic translation factor GTPase family. GTPBP1 subfamily. As to quaternary structure, interacts with EXOSC2/RRP4, EXOSC3/RRP40, EXOSC5/RRP46, HNRNPD, HNRNPR and SYNCRIP. Identified in a complex with AANAT mRNA, but does not bind mRNA by itself. As to expression, detected in some neurons in the brain cortex. Detected in small arteries, dendritic cells and macrophages in the thymus. Detected in lung bronchi, in bronchial epithelial cells and in bronchial smooth muscle cells. Detected in smooth muscle cells in a broad range of organs (at protein level). Expressed in brain, thymus, lung, and kidney.

The protein localises to the cytoplasm. Its function is as follows. Promotes degradation of target mRNA species. Plays a role in the regulation of circadian mRNA stability. Binds GTP and has GTPase activity. This chain is GTP-binding protein 1 (Gtpbp1), found in Mus musculus (Mouse).